We begin with the raw amino-acid sequence, 101 residues long: Small ribosomal subunit protein bS6 (101 aa).

This sequence belongs to the bacterial ribosomal protein bS6 family.

Its function is as follows. Binds together with bS18 to 16S ribosomal RNA. This Micrococcus luteus (strain ATCC 4698 / DSM 20030 / JCM 1464 / CCM 169 / CCUG 5858 / IAM 1056 / NBRC 3333 / NCIMB 9278 / NCTC 2665 / VKM Ac-2230) (Micrococcus lysodeikticus) protein is Small ribosomal subunit protein bS6.